The following is a 205-amino-acid chain: Fe/S biogenesis protein NfuA (205 aa).

[4Fe-4S] cluster is bound by residues Cys162 and Cys165.

Belongs to the NfuA family. In terms of assembly, homodimer. [4Fe-4S] cluster is required as a cofactor.

Its function is as follows. Involved in iron-sulfur cluster biogenesis. Binds a 4Fe-4S cluster, can transfer this cluster to apoproteins, and thereby intervenes in the maturation of Fe/S proteins. Could also act as a scaffold/chaperone for damaged Fe/S proteins. In Blochmanniella floridana, this protein is Fe/S biogenesis protein NfuA.